Consider the following 547-residue polypeptide: Probable ATP-dependent RNA helicase DDX56 (547 aa).

The Q motif motif lies at 7–35 (LGFEHMGLDPRLLQAVTDLGWSRPTLIQE). Positions 38 to 218 (IPLALEGKDL…ELILHNPVTL (181 aa)) constitute a Helicase ATP-binding domain. 51-58 (ARTGSGKT) contacts ATP. The residue at position 126 (S126) is a Phosphoserine. T141 carries the phosphothreonine modification. Residues 166–169 (DEAD) carry the DEAD box motif. A Helicase C-terminal domain is found at 230 to 424 (QLQQFQVVCE…PYQFRMEEIE (195 aa)). 2 stretches are compositionally biased toward basic residues: residues 506-525 (RPHK…KRAK) and 532-547 (SFKH…AKPS). The tract at residues 506 to 547 (RPHKKRKKLSSSCRKAKRAKSQNPLRSFKHKGKKFRPTAKPS) is disordered. S532 carries the phosphoserine modification.

It belongs to the DEAD box helicase family. DDX56/DBP9 subfamily. As to quaternary structure, may form homooligomeric complexes. Interacts with IRF3. Interacts with OCT4 and POU5F1. (Microbial infection) Interacts with West Nile virus capsid protein C. In terms of assembly, (Microbial infection) Interacts with foot-and-mouth disease virus protein 3A; this interaction leads to inhibition of type I interferon production. As to quaternary structure, (Microbial infection) Interacts with EMCV protein 3C; this interaction leads to inhibition of type I interferon production. As to expression, detected in heart, brain, liver, pancreas, placenta and lung.

The protein resides in the nucleus. The protein localises to the nucleolus. The enzyme catalyses ATP + H2O = ADP + phosphate + H(+). Functionally, nucleolar RNA helicase that plays a role in various biological processes including innate immunity, ribosome biogenesis or nucleolus organization. Plays an essential role in maintaining nucleolar integrity in planarian stem cells. Maintains embryonic stem cells proliferation by conventional regulation of ribosome assembly and interaction with OCT4 and POU5F1 complex. Regulates antiviral innate immunity by inhibiting the virus-triggered signaling nuclear translocation of IRF3. Mechanistically, acts by disrupting the interaction between IRF3 and importin IPO5. May play a role in later stages of the processing of the pre-ribosomal particles leading to mature 60S ribosomal subunits. Has intrinsic ATPase activity. In terms of biological role, (Microbial infection) Helicase activity is important for packaging viral RNA into virions during West Nile virus infection. Its function is as follows. (Microbial infection) Plays a positive role in foot-and-mouth disease virus replication by inhibiting the phosphorylation of IRF3 leading to inhibition of type I interferon. (Microbial infection) Plays a positive role in EMCV replication by interrupting IRF3 phosphorylation and its nucleus translocation. In Homo sapiens (Human), this protein is Probable ATP-dependent RNA helicase DDX56 (DDX56).